The chain runs to 1272 residues: MTDLSTPQRAGSHKLPAGRRLRFVTAAALFDGHDASINIMRRILQASGVEVIHLGHNRSVDEVATAALHEDADGVAVSSYQGGHNEYFRYLVDLLRARGGERIKVFGGGGGVIVPEEIAGLERYGVEKIYSPQDGQRLGLQGMIDDMIARCAEGARAAAATGESQVGAWAAEFSEHGLPRFDSRDDVGVDRQGAVARNPSSEASRVAAAGRGDHLDRGVRAASTADTADTANTANTANTANTGSVADAADAADAADAADAADAASTASTASTASTASTASTAGIPDPASLVFRRLAQLISAFETAAIDVNTRDKLSALAEVTAIPLLGITGTGGAGKSSLTDELIRRFRLDYGDALTIAVLAIDPSRRKSGGALLGDRIRMNAIGDWGGGARVYMRSMATREASSEISDSLPDALMLCKAAGFDLIVVETSGIGQGNAAIVPFVDESLYVMTPEFGAASQLEKIDMLDFASFVAINKFDRKGARDALRDVAKQVQRNRADFAKSPEAMPVFGTIASRFNDDGVTALYRHVAEALRKHGLRSGGGRLAAPEDLRFSSGRNAIVPPARVRYLADIAQTIHAYRERADAQARLARERWQLIEARRMLVETGEAARSTVATSASPGASASSKANACTSTSSKANASPGANTTANSNASATSGTATPTDALNPTLSQLDTLITQRTASLGERERILLDTWPEIVAAYSGTEHIVRVRDREIRTALTVATLSGSEVRKVSLPKFVDHGEILRWLMLDNLPGYFPFTAGVFPFRRENEDPTRMFAGEGDPQRTNRRFKLLSEGMPAKRLSTAFDSVTLYGEEPHERPDIYGKVGNSGVSVATLDDMKTLYDGFDLCAPETSVSMTINGPAPTILAMFFNVAIDQQIARTTQRQGRPLTEDELAATRRTALENVRGTVQADILKEDQGQNTCIFSTEFSLKVMGDIQAYFVEHGVRNFYSVSISGYHIAEAGANPISQLAYTLANGFTYVEAYLARGMSIDDFAPNLSFFFSNGMDPEYTVLGRVARRIWAVAMRERYGANERSQKLKYHVQTSGRSLHAQEIDFNDIRTTLQALIAIYDNCNSLHTNAFDEAITTPTEESVRRAVAIQLIINREWGLAKNQNPNQGSFVIEELTDLVEEAVLAEFDRLTERGGVLGAMETGYQRGRIQDESMLYEHRKHDGSYPIVGVNTFLSAHPHEAPQPIALARSTDDEKQSQLQRLRAFQAQHRDAAPAALERLKRAVIDDENVFAVLMDVVRVCSLGQITHALFEVGGQYRRNM.

Positions 20 to 158 constitute a B12-binding domain; it reads RLRFVTAAAL…ARCAEGARAA (139 aa). His-33 is a binding site for adenosylcob(III)alamin. Positions 163–536 are GTPase chaperone MeaI; that stretch reads ESQVGAWAAE…YRHVAEALRK (374 aa). The tract at residues 193–240 is disordered; it reads GAVARNPSSEASRVAAAGRGDHLDRGVRAASTADTADTANTANTANTA. The segment covering 221-240 has biased composition (low complexity); sequence AASTADTADTANTANTANTA. GTP is bound at residue 334–339; the sequence is GAGKSS. Mg(2+)-binding residues include Ser-338, Ile-363, Asp-364, and Asp-377. Residue Arg-380 coordinates GTP. Residues Glu-429 and Thr-430 each contribute to the Mg(2+) site. A GTP-binding site is contributed by 476-479; the sequence is NKFD. The linker stretch occupies residues 537-758; sequence HGLRSGGGRL…MLDNLPGYFP (222 aa). 2 stretches are compositionally biased toward low complexity: residues 614 to 631 and 639 to 663; these read TVAT…KANA and ANAS…ATPT. Residues 614-667 are disordered; the sequence is TVATSASPGASASSKANACTSTSSKANASPGANTTANSNASATSGTATPTDALN. 7 residues coordinate substrate: Phe-766, Arg-801, Arg-907, Tyr-951, Ser-1000, Arg-1035, and Lys-1040. Glu-1152 and Asn-1271 together coordinate GTP.

The protein belongs to the IcmF family. Homodimer. Adenosylcob(III)alamin serves as cofactor. Mg(2+) is required as a cofactor.

It catalyses the reaction 2-methylpropanoyl-CoA = butanoyl-CoA. It carries out the reaction GTP + H2O = GDP + phosphate + H(+). Its function is as follows. Catalyzes the reversible interconversion of isobutyryl-CoA and n-butyryl-CoA, using radical chemistry. Also exhibits GTPase activity, associated with its G-protein domain (MeaI) that functions as a chaperone that assists cofactor delivery and proper holo-enzyme assembly. Does not exhibit methylmalonyl-CoA mutase (MCM) activity. The protein is Fused isobutyryl-CoA mutase of Paraburkholderia xenovorans (strain LB400).